Reading from the N-terminus, the 254-residue chain is MIKKRIIPCLDVKDGRVVKGVQFKGLRDIGDPVALAAYYNAELADELVFLDISRTENGHQMMLDIIEETASKLFIPLTIGGGISSTDDISTLLKHGADKVSLNSSALRNPSLVKEASEKFGSQCICIAVDAKWEDERNDWFCYTHGGKQPTDIRVLDWVRQVEYLGAGELLVTSMDYDGVKQGFDHQLLNQINTVVSIPVIASGGGGNAQHFVDLFQQTNVSAGLAASIFHDKETTIGAVKTYLKDKGVDVRWH.

Residues D11 and D130 contribute to the active site.

It belongs to the HisA/HisF family. In terms of assembly, heterodimer of HisH and HisF.

The protein localises to the cytoplasm. The enzyme catalyses 5-[(5-phospho-1-deoxy-D-ribulos-1-ylimino)methylamino]-1-(5-phospho-beta-D-ribosyl)imidazole-4-carboxamide + L-glutamine = D-erythro-1-(imidazol-4-yl)glycerol 3-phosphate + 5-amino-1-(5-phospho-beta-D-ribosyl)imidazole-4-carboxamide + L-glutamate + H(+). The protein operates within amino-acid biosynthesis; L-histidine biosynthesis; L-histidine from 5-phospho-alpha-D-ribose 1-diphosphate: step 5/9. IGPS catalyzes the conversion of PRFAR and glutamine to IGP, AICAR and glutamate. The HisF subunit catalyzes the cyclization activity that produces IGP and AICAR from PRFAR using the ammonia provided by the HisH subunit. This is Imidazole glycerol phosphate synthase subunit HisF from Staphylococcus carnosus (strain TM300).